The chain runs to 313 residues: T-box protein 37 (313 aa).

A DNA-binding region (T-box) is located at residues 19–195 (IWEKFYPKTE…HNKFASGFRS (177 aa)). Residues 193–228 (FRSNGKRRLSSESENSENSPPKRSASAISSLTPPAI) form a disordered region.

It localises to the nucleus. Its function is as follows. Transcription factor. Required for mesodermal induction, acting redundantly with transcription factor tbx-38. Together with tbx-38, acts by inducing cell fates in the AB lineage, thereby playing a role in development of the anterior pharynx. The chain is T-box protein 37 (tbx-37) from Caenorhabditis elegans.